An 804-amino-acid polypeptide reads, in one-letter code: Endoplasmin (804 aa).

Positions 1–21 (MRALWVLGLCCVLLTFGSVRA) are cleaved as a signal peptide. The short motif at 42-44 (SRT) is the SRT pseudosubstrate motif element. Residue asparagine 62 is glycosylated (N-linked (GlcNAc...) asparagine). Serine 64 is modified (phosphoserine). Asparagine 107 carries N-linked (GlcNAc...) asparagine glycosylation. ATP contacts are provided by asparagine 107, aspartate 149, and asparagine 162. Position 168 is an N6-(2-hydroxyisobutyryl)lysine (lysine 168). Phosphoserine is present on serine 172. Residue phenylalanine 199 participates in ATP binding. Asparagine 217 is a glycosylation site (N-linked (GlcNAc...) asparagine). The residue at position 288 (threonine 288) is a Phosphothreonine; by CK2. Positions 288–323 (TVEEPMEEEEAAKEEKEDSDDEAAVEEEEEEKKPKT) are disordered. The segment covering 289-317 (VEEPMEEEEAAKEEKEDSDDEAAVEEEEE) has biased composition (acidic residues). Serine 306 carries the post-translational modification Phosphoserine; by CK2. A Phosphoserine modification is found at serine 403. Lysine 404 is subject to N6-succinyllysine. N-linked (GlcNAc...) asparagine glycosylation occurs at asparagine 445. Serine 447 is subject to Phosphoserine. N6-acetyllysine is present on lysine 479. N-linked (GlcNAc...) asparagine glycans are attached at residues asparagine 481 and asparagine 502. Lysine 633 bears the N6-succinyllysine mark. Positions 750-804 (DPDAKVEEEPEEEPEETTEDTTEDTEQDDEEEMDAGTDDEEQETVKKSTAEKDEL) are disordered. Positions 757-791 (EEPEEEPEETTEDTTEDTEQDDEEEMDAGTDDEEQ) are enriched in acidic residues. A phosphothreonine; by CK2 mark is found at threonine 766, threonine 770, threonine 774, and threonine 786. The segment covering 792–804 (ETVKKSTAEKDEL) has biased composition (basic and acidic residues). The Prevents secretion from ER signature appears at 801 to 804 (KDEL).

The protein belongs to the heat shock protein 90 family. Homodimer; disulfide-linked. Component of an EIF2 complex at least composed of CELF1/CUGBP1, CALR, CALR3, EIF2S1, EIF2S2, HSP90B1 and HSPA5. Part of a large chaperone multiprotein complex comprising DNAJB11, HSP90B1, HSPA5, HYOU, PDIA2, PDIA4, PDIA6, PPIB, SDF2L1, UGGT1 and very small amounts of ERP29, but not, or at very low levels, CALR nor CANX. Interacts with AIMP1; regulates its retention in the endoplasmic reticulum. Hyperglycosylated form interacts with OS9; promoting its degradation by the endoplasmic reticulum associated degradation (ERAD). Interacts with CNPY3. This interaction is disrupted in the presence of ATP. Interacts with TLR4 and TLR9, but not with TLR3. Interacts with MZB1 in a calcium-dependent manner. Interacts with METTL23. Interacts with IL1B; the interaction facilitates cargo translocation into the ERGIC. Interacts with EIF2AK3. Post-translationally, phosphorylated by CK2. In terms of processing, N-glycosylated cotranslationally at Asn-217 by STT3A-containing OST-A complex: this glycosylation is constitutive. In response to various stress, 5 additional facultative sites (Asn-62, Asn-107, Asn-445, Asn-481 and Asn-502) can be glycosylated post-translationally by STT3B-containing OST-B complex, leading to a hyperglycosylated form that is degraded by the ER-associated degradation (ERAD) pathway. In normal conditions, the OST-A complex together with CCDC134 prevent glycosylation at facultative sites during protein folding, thereby preventing hyperglycosylation. Mechanistically, nascent HSP90B1 is tethered during translation to a specialized CCDC134-containing translocon that forms a microenvironment for its folding, in which STT3A associates with the SRT pseudosubstrate motif, and prevents access to facultative glycosylation sites until folding is completed, rendering its facultative sites inaccessible to the OST-B complex. As to expression, detected in heart muscle (at protein level).

The protein resides in the endoplasmic reticulum lumen. The protein localises to the sarcoplasmic reticulum lumen. It is found in the melanosome. It catalyses the reaction ATP + H2O = ADP + phosphate + H(+). Functionally, ATP-dependent chaperone involved in the processing of proteins in the endoplasmic reticulum, regulating their transport. Together with MESD, acts as a modulator of the Wnt pathway by promoting the folding of LRP6, a coreceptor of the canonical Wnt pathway. When associated with CNPY3, required for proper folding of Toll-like receptors. Promotes folding and trafficking of TLR4 to the cell surface. May participate in the unfolding of cytosolic leaderless cargos (lacking the secretion signal sequence) such as the interleukin 1/IL-1 to facilitate their translocation into the ERGIC (endoplasmic reticulum-Golgi intermediate compartment) and secretion; the translocation process is mediated by the cargo receptor TMED10. May also function in endoplasmic reticulum associated degradation (ERAD); it is however unclear whether it participates to ERAD or is a target of ERAD. This Canis lupus familiaris (Dog) protein is Endoplasmin (HSP90B1).